The following is a 723-amino-acid chain: Choline transporter-like protein 4 (723 aa).

Residues 1–36 (MGKKKQEEEQNSSEYGAPAQYDPTFNGPIHKRSCTD) lie on the Cytoplasmic side of the membrane. The chain crosses the membrane as a helical span at residues 37–57 (IICCVLFMLVITGYMVVGILA). Residues 58-245 (WLYGDPRHVL…RIFEDFAKTW (188 aa)) lie on the Extracellular side of the membrane. N71, N202, N211, and N219 each carry an N-linked (GlcNAc...) asparagine glycan. The helical transmembrane segment at 246–266 (QWIVAGLVIAMVVSVLFLLLL) threads the bilayer. Topologically, residues 267-269 (RFT) are cytoplasmic. Residues 270–290 (APVLIWILIFGVLAVGAFGIW) traverse the membrane as a helical segment. Residues 291–325 (YCYNDYMSLASSNLTFSNVGFTTNVQVYLQVRDTW) are Extracellular-facing. N303 is a glycosylation site (N-linked (GlcNAc...) asparagine). Residues 326 to 346 (LAFLIILCIVEAVLILALIFL) form a helical membrane-spanning segment. Over 347–374 (RTRILIAIALIQETSKALGHMMSTLLYP) the chain is Cytoplasmic. The helical transmembrane segment at 375 to 395 (VVTFVLLLVCVSYWGITALYL) threads the bilayer. Residues 396 to 464 (ATSGAPIYKV…RNLFNLQIYN (69 aa)) are Extracellular-facing. N-linked (GlcNAc...) asparagine glycosylation is found at N409, N421, and N430. Residues 465–485 (VVAFLWCVNFVIALGHCTLAG) form a helical membrane-spanning segment. Over 486 to 516 (AFASYYWAFSKPADIPTFPLTQSFMRALRYH) the chain is Cytoplasmic. Residues 517 to 537 (VGSLAFGALILTLVQIVRIIL) traverse the membrane as a helical segment. The Extracellular segment spans residues 538–578 (EYLDHKFKAAQNPCARFLMCCLKCCFWCLEKFIKFINRNAY). The helical transmembrane segment at 579 to 599 (IMIAIYGKNFCVSAKNAFFLL) threads the bilayer. Residues 600-615 (MRNIVRVVVLDKVTDL) are Cytoplasmic-facing. The chain crosses the membrane as a helical span at residues 616–636 (LLFFGKLLVVGGIGVLAFFFF). Residues 637 to 655 (SGRIQLPGNTFQTAALNYY) lie on the Extracellular side of the membrane. The helical transmembrane segment at 656-676 (WMPIITVVFGAYLIAHGFFSV) threads the bilayer. At 677 to 723 (YNMGVDTLFLCFLEDLERNDGSAEKPYFMSKNLMKILNKKNKQPKTG) the chain is on the cytoplasmic side.

Belongs to the CTL (choline transporter-like) family.

It is found in the membrane. Its subcellular location is the apical cell membrane. It carries out the reaction choline(out) + n H(+)(in) = choline(in) + n H(+)(out). The catalysed reaction is thiamine diphosphate(out) = thiamine diphosphate(in). Functionally, choline transporter that seems to play a role in the choline-acetylcholine system and is required to the efferent innervation of hair cells in the olivocochlear bundle for the maintenance of physiological function of outer hair cells and the protection of hair cells from acoustic injury. Also described as a thiamine pyrophosphate transporter. This Danio rerio (Zebrafish) protein is Choline transporter-like protein 4 (slc44a4).